We begin with the raw amino-acid sequence, 274 residues long: Cytochrome b-c1 complex subunit Rieske, mitochondrial (274 aa).

Residues 79 to 103 (SHTDIKVPDFSDYRRAEVLDSTKSS) lie on the Mitochondrial matrix side of the membrane. The chain crosses the membrane as a helical span at residues 104-140 (KESSEARKGFSYLVTATTTVGVAYAAKNAVSQFVSSM). The Mitochondrial intermembrane portion of the chain corresponds to 141-274 (SASADVLAMS…FTSGDVVVVG (134 aa)). The 86-residue stretch at 187-272 (EAAVEVSQLR…YEFTSGDVVV (86 aa)) folds into the Rieske domain. [2Fe-2S] cluster is bound by residues Cys-217, His-219, Cys-236, His-239, and Ser-241. The cysteines at positions 222 and 238 are disulfide-linked.

This sequence belongs to the Rieske iron-sulfur protein family. In terms of assembly, component of the ubiquinol-cytochrome c oxidoreductase (cytochrome b-c1 complex, complex III, CIII), a multisubunit enzyme composed of 11 subunits. The complex is composed of 3 respiratory subunits cytochrome b, cytochrome c1 and Rieske protein UQCRFS1, 2 core protein subunits UQCRC1/QCR1 and UQCRC2/QCR2, and 6 low-molecular weight protein subunits UQCRH/QCR6, UQCRB/QCR7, UQCRQ/QCR8, UQCR10/QCR9, UQCR11/QCR10 and subunit 9, the cleavage product of Rieske protein UQCRFS1. The complex exists as an obligatory dimer and forms supercomplexes (SCs) in the inner mitochondrial membrane with NADH-ubiquinone oxidoreductase (complex I, CI) and cytochrome c oxidase (complex IV, CIV), resulting in different assemblies (supercomplex SCI(1)III(2)IV(1) and megacomplex MCI(2)III(2)IV(2)). Incorporation of the Rieske protein UQCRFS1 is the penultimate step in complex III assembly. Interacts with TTC19, which is involved in the clearance of UQCRFS1 fragments. As to quaternary structure, component of the ubiquinol-cytochrome c oxidoreductase (cytochrome b-c1 complex, complex III, CIII). Subunit 9 corresponds to the mitochondrial targeting sequence (MTS) of Rieske protein UQCRFS1. It is retained after processing and incorporated inside complex III, where it remains bound to the complex and localizes between the 2 core subunits UQCRC1/QCR1 and UQCRC2/QCR2. The cofactor is [2Fe-2S] cluster. Post-translationally, proteolytic processing is necessary for the correct insertion of UQCRFS1 in the complex III dimer. Several fragments are generated during UQCRFS1 insertion, most probably due to the endogenous matrix-processing peptidase (MPP) activity of the 2 core protein subunits UQCRC1/QCR1 and UQCRC2/QCR2, which are homologous to the 2 mitochondrial-processing peptidase (MPP) subunits beta-MPP and alpha-MPP respectively. The action of the protease is also necessary for the clearance of the UQCRFS1 fragments.

It is found in the mitochondrion inner membrane. The enzyme catalyses a quinol + 2 Fe(III)-[cytochrome c](out) = a quinone + 2 Fe(II)-[cytochrome c](out) + 2 H(+)(out). In terms of biological role, component of the ubiquinol-cytochrome c oxidoreductase, a multisubunit transmembrane complex that is part of the mitochondrial electron transport chain which drives oxidative phosphorylation. The respiratory chain contains 3 multisubunit complexes succinate dehydrogenase (complex II, CII), ubiquinol-cytochrome c oxidoreductase (cytochrome b-c1 complex, complex III, CIII) and cytochrome c oxidase (complex IV, CIV), that cooperate to transfer electrons derived from NADH and succinate to molecular oxygen, creating an electrochemical gradient over the inner membrane that drives transmembrane transport and the ATP synthase. The cytochrome b-c1 complex catalyzes electron transfer from ubiquinol to cytochrome c, linking this redox reaction to translocation of protons across the mitochondrial inner membrane, with protons being carried across the membrane as hydrogens on the quinol. In the process called Q cycle, 2 protons are consumed from the matrix, 4 protons are released into the intermembrane space and 2 electrons are passed to cytochrome c. The Rieske protein is a catalytic core subunit containing a [2Fe-2S] iron-sulfur cluster. It cycles between 2 conformational states during catalysis to transfer electrons from the quinol bound in the Q(0) site in cytochrome b to cytochrome c1. Incorporation of UQCRFS1 is the penultimate step in complex III assembly. Functionally, component of the ubiquinol-cytochrome c oxidoreductase (cytochrome b-c1 complex, complex III, CIII). UQCRFS1 undergoes proteolytic processing once it is incorporated in the complex III dimer. One of the fragments, called subunit 9, corresponds to its mitochondrial targeting sequence (MTS). The proteolytic processing is necessary for the correct insertion of UQCRFS1 in the complex III dimer, but the persistence of UQCRFS1-derived fragments may prevent newly imported UQCRFS1 to be processed and assembled into complex III and is detrimental for the complex III structure and function. The sequence is that of Cytochrome b-c1 complex subunit Rieske, mitochondrial (Uqcrfs1) from Rattus norvegicus (Rat).